A 416-amino-acid chain; its full sequence is 2-amino-3-ketobutyrate coenzyme A ligase, mitochondrial (416 aa).

The transit peptide at 1–18 (MWASFMWHGALSPGRRAH) directs the protein to the mitochondrion. At Lys42 the chain carries N6-acetyllysine; alternate. The residue at position 42 (Lys42) is an N6-succinyllysine; alternate. Position 131-132 (131-132 (CF)) interacts with pyridoxal 5'-phosphate. His156 contacts substrate. Lys184 is modified (N6-acetyllysine; alternate). At Lys184 the chain carries N6-succinyllysine; alternate. Pyridoxal 5'-phosphate is bound by residues Ser203, 259–262 (TLGK), and 292–293 (SN). Lys262 carries the post-translational modification N6-(pyridoxal phosphate)lysine. Lys323 and Lys365 each carry N6-succinyllysine. The residue at position 380 (Lys380) is an N6-acetyllysine; alternate. Lys380 carries the post-translational modification N6-succinyllysine; alternate. Arg386 contacts substrate.

The protein belongs to the class-II pyridoxal-phosphate-dependent aminotransferase family. The cofactor is pyridoxal 5'-phosphate.

It localises to the mitochondrion. The protein resides in the nucleus. It catalyses the reaction glycine + acetyl-CoA = (2S)-2-amino-3-oxobutanoate + CoA. It functions in the pathway amino-acid degradation; L-threonine degradation via oxydo-reductase pathway; glycine from L-threonine: step 2/2. Pyridoxal phosphate (PLP) dependent enzyme, which catalyzes the cleavage of 2-amino-3-oxobutanoate to glycine and acetyl-CoA. Catalyzes the second reaction step on the main metabolic degradation pathway for L-threonine. The polypeptide is 2-amino-3-ketobutyrate coenzyme A ligase, mitochondrial (Gcat) (Mus musculus (Mouse)).